The following is a 198-amino-acid chain: Cytochrome c oxidase subunit 2 (198 aa).

The helical transmembrane segment at 1–13 (AICSLVLYLLTLM) threads the bilayer. At 14 to 26 (LMEKLSSNTVDAQ) the chain is on the mitochondrial matrix side. A helical membrane pass occupies residues 27 to 54 (EVELIWTILPAIVLILLALPSLQILYMM). The Mitochondrial intermembrane portion of the chain corresponds to 55 to 198 (DEIDEPDLTL…WSSLLSTSSL (144 aa)). Cu cation contacts are provided by His-128, Cys-163, Glu-165, Cys-167, His-171, and Met-174. Glu-165 serves as a coordination point for Mg(2+).

Belongs to the cytochrome c oxidase subunit 2 family. In terms of assembly, component of the cytochrome c oxidase (complex IV, CIV), a multisubunit enzyme composed of 14 subunits. The complex is composed of a catalytic core of 3 subunits MT-CO1, MT-CO2 and MT-CO3, encoded in the mitochondrial DNA, and 11 supernumerary subunits COX4I, COX5A, COX5B, COX6A, COX6B, COX6C, COX7A, COX7B, COX7C, COX8 and NDUFA4, which are encoded in the nuclear genome. The complex exists as a monomer or a dimer and forms supercomplexes (SCs) in the inner mitochondrial membrane with NADH-ubiquinone oxidoreductase (complex I, CI) and ubiquinol-cytochrome c oxidoreductase (cytochrome b-c1 complex, complex III, CIII), resulting in different assemblies (supercomplex SCI(1)III(2)IV(1) and megacomplex MCI(2)III(2)IV(2)). Found in a complex with TMEM177, COA6, COX18, COX20, SCO1 and SCO2. Interacts with TMEM177 in a COX20-dependent manner. Interacts with COX20. Interacts with COX16. Requires Cu cation as cofactor.

The protein localises to the mitochondrion inner membrane. The enzyme catalyses 4 Fe(II)-[cytochrome c] + O2 + 8 H(+)(in) = 4 Fe(III)-[cytochrome c] + 2 H2O + 4 H(+)(out). In terms of biological role, component of the cytochrome c oxidase, the last enzyme in the mitochondrial electron transport chain which drives oxidative phosphorylation. The respiratory chain contains 3 multisubunit complexes succinate dehydrogenase (complex II, CII), ubiquinol-cytochrome c oxidoreductase (cytochrome b-c1 complex, complex III, CIII) and cytochrome c oxidase (complex IV, CIV), that cooperate to transfer electrons derived from NADH and succinate to molecular oxygen, creating an electrochemical gradient over the inner membrane that drives transmembrane transport and the ATP synthase. Cytochrome c oxidase is the component of the respiratory chain that catalyzes the reduction of oxygen to water. Electrons originating from reduced cytochrome c in the intermembrane space (IMS) are transferred via the dinuclear copper A center (CU(A)) of subunit 2 and heme A of subunit 1 to the active site in subunit 1, a binuclear center (BNC) formed by heme A3 and copper B (CU(B)). The BNC reduces molecular oxygen to 2 water molecules using 4 electrons from cytochrome c in the IMS and 4 protons from the mitochondrial matrix. The chain is Cytochrome c oxidase subunit 2 (MT-CO2) from Tinamus major (Great tinamou).